Consider the following 364-residue polypeptide: Peptidyl-prolyl cis-trans isomerase D (364 aa).

Residues 7-170 (YFDITIGNKP…EDAVIAKCGE (164 aa)) enclose the PPIase cyclophilin-type domain. 3 TPR repeats span residues 208–241 (ATHL…LNEK), 261–294 (IPCY…DSKY), and 301–334 (TKAY…DPED).

It belongs to the cyclophilin-type PPIase family. PPIase D subfamily.

The protein localises to the cytoplasm. The enzyme catalyses [protein]-peptidylproline (omega=180) = [protein]-peptidylproline (omega=0). Its function is as follows. PPIases accelerate the folding of proteins. It catalyzes the cis-trans isomerization of proline imidic peptide bonds in oligopeptides. The polypeptide is Peptidyl-prolyl cis-trans isomerase D (cyp12) (Rhizopus delemar (strain RA 99-880 / ATCC MYA-4621 / FGSC 9543 / NRRL 43880) (Mucormycosis agent)).